A 485-amino-acid polypeptide reads, in one-letter code: MTITPQQLIALLPLLIVGLTVVVVMLGIAWRRDHFINATLTVIGLNLALLSLYFVGQAGPMDVTPLLRVDGYSMFYTGLVILASLATCTFAYPWLVGYPDNREEFYLLVLIATLGGILLASANHLASLFLGIELISLPLFGLVGYAYRQKRPLEAAIKYMLLSAAASSFLLFGMALLYAESGDLSLAGLGKSLQENMMHQPLVLAGMGMMIVGLGFKLSLVPFQLWTPDVYQGAPAPVSTFLATASKIAIFAVVMRLFLYAPAADNEALRMVLSIIAVCSILFGNLMAISQTNIKRLLGYSSIAHLGYLLVALIAVQTHQLSLETAGVYLAGYLFSSLGAFGVVSLMSSPYRGPDADSLFSYRGLFWHKPILSAVMTVMMLSLAGIPMTLGFIGKFFVIAMGVSAHLWWLTGAVVLGSAIGLYYYLRVTVSLFLSAPEALQRDTPNNWALTAGGVVVLISAALVLLLGVYPQPLITLVQMAQPMF.

A run of 14 helical transmembrane segments spans residues 8–28 (LIAL…MLGI), 35–55 (FINA…LYFV), 78–98 (GLVI…LVGY), 104–124 (EFYL…SANH), 125–145 (LASL…LVGY), 159–179 (YMLL…LLYA), 203–223 (VLAG…LVPF), 235–255 (PAPV…AVVM), 271–291 (MVLS…AISQ), 297–317 (LLGY…IAVQ), 327–347 (GVYL…VSLM), 374–394 (AVMT…GFIG), 408–427 (WWLT…YYLR), and 449–469 (ALTA…LLGV).

This sequence belongs to the complex I subunit 2 family. NDH-1 is composed of 13 different subunits. Subunits NuoA, H, J, K, L, M, N constitute the membrane sector of the complex.

It localises to the cell inner membrane. The enzyme catalyses a quinone + NADH + 5 H(+)(in) = a quinol + NAD(+) + 4 H(+)(out). Its function is as follows. NDH-1 shuttles electrons from NADH, via FMN and iron-sulfur (Fe-S) centers, to quinones in the respiratory chain. The immediate electron acceptor for the enzyme in this species is believed to be ubiquinone. Couples the redox reaction to proton translocation (for every two electrons transferred, four hydrogen ions are translocated across the cytoplasmic membrane), and thus conserves the redox energy in a proton gradient. This Serratia proteamaculans (strain 568) protein is NADH-quinone oxidoreductase subunit N.